Here is a 1181-residue protein sequence, read N- to C-terminus: C5a peptidase (1181 aa).

Residues 1–31 (MRKKQKLPFDKLAIALMSTSILLNAQSDIKA) form the signal peptide. A compositionally biased stretch (polar residues) spans 33–52 (TVTEDTPATEQAVETPQPTA). Residues 33-117 (TVTEDTPATE…PSQVKTLQEK (85 aa)) are disordered. Positions 70–81 (DDAEETIADDAN) are enriched in acidic residues. The 483-residue stretch at 99 to 581 (KATIRDLNDP…AGAVDAKKAS (483 aa)) folds into the Peptidase S8 domain. Active-site charge relay system residues include Asp-130, His-193, and Ser-512. 4 stretches are compositionally biased toward basic and acidic residues: residues 1029 to 1054 (EGHS…KPEQ), 1061 to 1071 (PDKKPETKPEQ), 1078 to 1088 (PDKKPETKPEQ), and 1095 to 1107 (PDKK…EKDS). The interval 1029-1150 (EGHSNKPEQD…KDQLPTTNDK (122 aa)) is disordered. 5 consecutive repeat copies span residues 1034–1050 (KPEQ…KPET), 1051–1067 (KPEQ…KPET), 1068–1084 (KPEQ…KPET), 1085–1101 (KPEQ…KPET), and 1102–1118 (KPEK…TPQK). Residues 1034–1118 (KPEQDGSDQA…GQTPGKTPQK (85 aa)) are 5 X 17 AA tandem repeats. Polar residues-rich tracts occupy residues 1109 to 1123 (GQTP…QPSR) and 1137 to 1147 (KASTKDQLPTT). The LPXTG sorting signal motif lies at 1144–1148 (LPTTN). Thr-1147 carries the post-translational modification Pentaglycyl murein peptidoglycan amidated threonine. Residues 1148 to 1181 (NDKDTNRLHLLKLVMTTFFLGLVAHIFKTKRTED) constitute a propeptide, removed by sortase.

Belongs to the peptidase S8 family. Cleaved by SpeB protease; leading to its degradation. Degradation by SpeB is probably strictly regulated to preserve integrity of C5a peptidase.

The protein resides in the secreted. It localises to the cell wall. It catalyses the reaction The primary cleavage site is at 67-His-|-Lys-68 in human C5a with a minor secondary cleavage site at 58-Ala-|-Ser-59.. Functionally, this virulence factor of S.pyogenes specifically cleaves the human serum chemotaxin C5a at '68-Lys-|-Asp-69' bond near its C-terminus, destroying its ability to serve as a chemoattractant. The polypeptide is C5a peptidase (scpA) (Streptococcus pyogenes serotype M1).